The following is a 364-amino-acid chain: Chorismate synthase (364 aa).

R48 is an NADP(+) binding site. FMN contacts are provided by residues 131–133, 243–244, G288, 303–307, and R329; these read RSS, NA, and KPTSS.

This sequence belongs to the chorismate synthase family. As to quaternary structure, homotetramer. Requires FMNH2 as cofactor.

The catalysed reaction is 5-O-(1-carboxyvinyl)-3-phosphoshikimate = chorismate + phosphate. Its pathway is metabolic intermediate biosynthesis; chorismate biosynthesis; chorismate from D-erythrose 4-phosphate and phosphoenolpyruvate: step 7/7. Functionally, catalyzes the anti-1,4-elimination of the C-3 phosphate and the C-6 proR hydrogen from 5-enolpyruvylshikimate-3-phosphate (EPSP) to yield chorismate, which is the branch point compound that serves as the starting substrate for the three terminal pathways of aromatic amino acid biosynthesis. This reaction introduces a second double bond into the aromatic ring system. This chain is Chorismate synthase, found in Brucella anthropi (strain ATCC 49188 / DSM 6882 / CCUG 24695 / JCM 21032 / LMG 3331 / NBRC 15819 / NCTC 12168 / Alc 37) (Ochrobactrum anthropi).